Here is a 1101-residue protein sequence, read N- to C-terminus: Endoglucanase C (1101 aa).

A signal peptide spans 1-32; the sequence is MVSRRSSQARGALTAVVATLALALAGSGTALA. 2 CBM-cenC domains span residues 64–173 and 212–318; these read LCVA…TFCL and MCVD…EFCI. The catalytic stretch occupies residues 329–880; that stretch reads PPPGYEPDTG…PDGCAPSACY (552 aa). The Nucleophile role is filled by Asp506. His831 is a catalytic residue. The interval 838 to 865 is disordered; the sequence is QLDPSLPSPPPGSLAGGPNSQAATWDPT. Catalysis depends on residues Asp882 and Glu891. Ig-like domains follow at residues 918–1006 and 1008–1097; these read TAPV…LTVE and AAPV…LAVQ.

The protein belongs to the glycosyl hydrolase 9 (cellulase E) family.

The catalysed reaction is Endohydrolysis of (1-&gt;4)-beta-D-glucosidic linkages in cellulose, lichenin and cereal beta-D-glucans.. Functionally, the biological conversion of cellulose to glucose generally requires three types of hydrolytic enzymes: (1) Endoglucanases which cut internal beta-1,4-glucosidic bonds; (2) Exocellobiohydrolases that cut the disaccharide cellobiose from the non-reducing end of the cellulose polymer chain; (3) Beta-1,4-glucosidases which hydrolyze the cellobiose and other short cello-oligosaccharides to glucose. The protein is Endoglucanase C (cenC) of Cellulomonas fimi (strain ATCC 484 / DSM 20113 / JCM 1341 / CCUG 24087 / LMG 16345 / NBRC 15513 / NCIMB 8980 / NCTC 7547 / NRS-133).